Reading from the N-terminus, the 179-residue chain is MKKSVLTAFITVVCATSSVMAADDNAITDGSVTFNGKVIAPACTLVAATKDSVVTLPDVSATKLQTNGQVSGVQIDVPIELKDCDTTVTKNATFTFNGTADTTQITAFANQASSDAATNVALQMYMNDGTTAITPDTETGNILLQDGDQTLTFKVDYIATGKATSGNVNAVTNFHINYY.

A signal peptide spans Met1–Ala21.

The protein belongs to the fimbrial protein family.

It is found in the fimbrium. In terms of biological role, part of the elfADCG-ycbUVF fimbrial operon, which promotes adhesion of bacteria to different abiotic surfaces. ElfA is the major fimbrial subunit produced by this operon. This Escherichia coli (strain K12) protein is Fimbrial subunit ElfA (elfA).